We begin with the raw amino-acid sequence, 232 residues long: RNA chaperone ProQ (232 aa).

The interval 105–182 (EAKARVQAQR…REEQHTPVSD (78 aa)) is disordered. Basic and acidic residues-rich tracts occupy residues 117-138 (QQAKKREAAAAAGEKEDAPPRE) and 147-177 (RRKEGAERKPRAQKPVEKAPKTVKAPREEQH).

It belongs to the ProQ family.

The protein resides in the cytoplasm. Functionally, RNA chaperone with significant RNA binding, RNA strand exchange and RNA duplexing activities. May regulate ProP activity through an RNA-based, post-transcriptional mechanism. This chain is RNA chaperone ProQ, found in Escherichia coli O139:H28 (strain E24377A / ETEC).